The sequence spans 748 residues: Putative transmembrane protein ORF88 (748 aa).

The N-terminal stretch at 1 to 20 is a signal peptide; it reads MIIMKSIILLLAWFLTKTQA. Topologically, residues 21–723 are extracellular; it reads NMLTESLYLS…LNLAPFKTLS (703 aa). 8 N-linked (GlcNAc...) asparagine; by host glycosylation sites follow: Asn-55, Asn-78, Asn-99, Asn-152, Asn-189, Asn-390, Asn-467, and Asn-499. The disordered stretch occupies residues 531-574; that stretch reads LTFDSPPPPPTTTQAPPPPPTTTQAPPPPPTTTQAPPPPIVINT. Over residues 535–570 the composition is skewed to pro residues; the sequence is SPPPPPTTTQAPPPPPTTTQAPPPPPTTTQAPPPPI. Asn-573, Asn-584, Asn-599, Asn-612, and Asn-617 each carry an N-linked (GlcNAc...) asparagine; by host glycan. The disordered stretch occupies residues 650–680; sequence PSIGRAPIPPPDVPVEPPRSIPTTNAPSPEE. Residues 656-669 are compositionally biased toward pro residues; that stretch reads PIPPPDVPVEPPRS. Residues 724–744 traverse the membrane as a helical segment; the sequence is YAGIGVVSFALLFTILVVCLI. Topologically, residues 745–748 are cytoplasmic; it reads KFSI.

The protein resides in the host membrane. The sequence is that of Putative transmembrane protein ORF88 from Magallana gigas (Pacific oyster).